Reading from the N-terminus, the 218-residue chain is UPF0319 protein PM0395 (218 aa).

The N-terminal stretch at 1-21 (MKFRFAALASVALLTSTVSVA) is a signal peptide.

The protein belongs to the UPF0319 family.

The sequence is that of UPF0319 protein PM0395 from Pasteurella multocida (strain Pm70).